A 208-amino-acid polypeptide reads, in one-letter code: Imidazole glycerol phosphate synthase subunit HisH (208 aa).

The Glutamine amidotransferase type-1 domain maps to methionine 1–serine 206. Cysteine 79 functions as the Nucleophile in the catalytic mechanism. Catalysis depends on residues histidine 181 and glutamate 183.

In terms of assembly, heterodimer of HisH and HisF.

Its subcellular location is the cytoplasm. The catalysed reaction is 5-[(5-phospho-1-deoxy-D-ribulos-1-ylimino)methylamino]-1-(5-phospho-beta-D-ribosyl)imidazole-4-carboxamide + L-glutamine = D-erythro-1-(imidazol-4-yl)glycerol 3-phosphate + 5-amino-1-(5-phospho-beta-D-ribosyl)imidazole-4-carboxamide + L-glutamate + H(+). It catalyses the reaction L-glutamine + H2O = L-glutamate + NH4(+). It participates in amino-acid biosynthesis; L-histidine biosynthesis; L-histidine from 5-phospho-alpha-D-ribose 1-diphosphate: step 5/9. Functionally, IGPS catalyzes the conversion of PRFAR and glutamine to IGP, AICAR and glutamate. The HisH subunit catalyzes the hydrolysis of glutamine to glutamate and ammonia as part of the synthesis of IGP and AICAR. The resulting ammonia molecule is channeled to the active site of HisF. The polypeptide is Imidazole glycerol phosphate synthase subunit HisH (Lactiplantibacillus plantarum (strain ATCC BAA-793 / NCIMB 8826 / WCFS1) (Lactobacillus plantarum)).